The primary structure comprises 283 residues: Formamidopyrimidine-DNA glycosylase (283 aa).

The active-site Schiff-base intermediate with DNA is Pro-2. Catalysis depends on Glu-3, which acts as the Proton donor. Lys-58 serves as the catalytic Proton donor; for beta-elimination activity. 3 residues coordinate DNA: His-100, Arg-119, and Arg-162. The segment at 247 to 283 adopts an FPG-type zinc-finger fold; the sequence is RVYGREGLPCVTPGCSGTVGRIVQSGRSSFHCPLCQR. Arg-273 acts as the Proton donor; for delta-elimination activity in catalysis.

The protein belongs to the FPG family. As to quaternary structure, monomer. Requires Zn(2+) as cofactor.

It catalyses the reaction Hydrolysis of DNA containing ring-opened 7-methylguanine residues, releasing 2,6-diamino-4-hydroxy-5-(N-methyl)formamidopyrimidine.. It carries out the reaction 2'-deoxyribonucleotide-(2'-deoxyribose 5'-phosphate)-2'-deoxyribonucleotide-DNA = a 3'-end 2'-deoxyribonucleotide-(2,3-dehydro-2,3-deoxyribose 5'-phosphate)-DNA + a 5'-end 5'-phospho-2'-deoxyribonucleoside-DNA + H(+). Involved in base excision repair of DNA damaged by oxidation or by mutagenic agents. Acts as a DNA glycosylase that recognizes and removes damaged bases. Has a preference for oxidized purines, such as 7,8-dihydro-8-oxoguanine (8-oxoG). Has AP (apurinic/apyrimidinic) lyase activity and introduces nicks in the DNA strand. Cleaves the DNA backbone by beta-delta elimination to generate a single-strand break at the site of the removed base with both 3'- and 5'-phosphates. The sequence is that of Formamidopyrimidine-DNA glycosylase from Cereibacter sphaeroides (strain ATCC 17029 / ATH 2.4.9) (Rhodobacter sphaeroides).